Consider the following 356-residue polypeptide: Septin-12 (356 aa).

Residues Met1–Glu23 form a disordered region. Over residues Pro7–Ser16 the composition is skewed to low complexity. Positions Thr44 to Glu315 constitute a Septin-type G domain. Residues Thr44–His317 are interaction with SEPTIN7. The tract at residues Gly54–Ser61 is G1 motif. GTP-binding positions include Gly54 to Ser61, Thr87, Gly113, Arg193 to Glu201, Gly249, and Arg264. Residues Asp110–Gly113 are G3 motif. Positions Ala192–Asp195 are G4 motif. A self-association (via N-terminus) to polymerize octameric septin 12-7-6-2/4-2/4-6-7-12 filaments region spans residues Val256–Cys356. The segment at Pro330 to Cys356 is disordered.

The protein belongs to the TRAFAC class TrmE-Era-EngA-EngB-Septin-like GTPase superfamily. Septin GTPase family. As to quaternary structure, septins polymerize into heterooligomeric protein complexes that form filaments, and can associate with cellular membranes, actin filaments and microtubules. GTPase activity is required for filament formation. Interacts with SEPTIN6 and SEPTIN11. Self-associates. Component of a octameric complex consisting of SEPTIN12, SEPTIN7, SEPTIN6 and SEPTIN2 or SEPTIN4 in the order 12-7-6-2-2-6-7-12 or 12-7-6-4-4-6-7-12 and located in the sperm annulus; the octamer polymerizes into filaments via the SEPTIN12 N- and C-termini; the SEPTIN12:SEPTIN7 association is mediated by the GTP-binding domains. Interacts with SPAG4 and LMNB1. Associates with alpha- and beta-tubulins. In terms of tissue distribution, predominantly expressed in testis and epididymis. Component of the sperm tail annulus (at protein level).

It localises to the cytoplasm. The protein resides in the cytoskeleton. Its subcellular location is the spindle. It is found in the cell projection. The protein localises to the cilium. It localises to the flagellum. Filament-forming cytoskeletal GTPase. May play a role in cytokinesis (Potential). Involved in spermatogenesis. Involved in the morphogenesis of sperm heads and the elongation of sperm tails probably implicating the association with alpha- and beta-tubulins. Forms a filamentous structure with SEPTIN7, SEPTIN6, SEPTIN2 and probably SEPTIN4 at the sperm annulus which is required for the structural integrity and motility of the sperm tail during postmeiotic differentiation. In Rattus norvegicus (Rat), this protein is Septin-12.